Reading from the N-terminus, the 155-residue chain is Large ribosomal subunit protein uL22c (155 aa).

The protein belongs to the universal ribosomal protein uL22 family. In terms of assembly, part of the 50S ribosomal subunit.

Its subcellular location is the plastid. The protein resides in the chloroplast. Its function is as follows. This protein binds specifically to 23S rRNA. In terms of biological role, the globular domain of the protein is located near the polypeptide exit tunnel on the outside of the subunit, while an extended beta-hairpin is found that lines the wall of the exit tunnel in the center of the 70S ribosome. This Coffea arabica (Arabian coffee) protein is Large ribosomal subunit protein uL22c (rpl22).